Consider the following 61-residue polypeptide: Small ribosomal subunit protein uS14B (61 aa).

Zn(2+)-binding residues include Cys-24, Cys-27, Cys-40, and Cys-43.

It belongs to the universal ribosomal protein uS14 family. Zinc-binding uS14 subfamily. Part of the 30S ribosomal subunit. Contacts proteins S3 and S10. The cofactor is Zn(2+).

Its function is as follows. Binds 16S rRNA, required for the assembly of 30S particles and may also be responsible for determining the conformation of the 16S rRNA at the A site. This is Small ribosomal subunit protein uS14B from Mycolicibacterium gilvum (strain PYR-GCK) (Mycobacterium gilvum (strain PYR-GCK)).